Reading from the N-terminus, the 514-residue chain is Transmembrane protein 151B (514 aa).

The interval 1-40 is disordered; that stretch reads MSAEGEPAEAVAETPANSPGEEAAAAAATTDVDVREEQRP. A run of 3 helical transmembrane segments spans residues 57–77, 104–124, and 286–306; these read CLLL…CQVT, YVYI…VECW, and PWYV…SWPL.

The protein belongs to the TMEM151 family.

It localises to the membrane. The protein is Transmembrane protein 151B (tmem151b) of Xenopus tropicalis (Western clawed frog).